A 275-amino-acid polypeptide reads, in one-letter code: MVISDYFEIERAYAKLNLYLDVLSKRPDGYHNITGLFQTIDLHDELEISQIDKRGEVRIETNIEIQGTNLIEKAFRTVEKFYNVGFGIKVRLKKNIPMGSGLGGGSSDAAAVLRFLGRKLKISIKDLLILAAEVGSDVPFLIVGGTAIVEGRGEKVTFLNPISDYRVDLFCPTISVSTKFAYQMIHESTYAKKPDFALKLYEAYLKRDHNQIKALSYNVFQEIMTSKYPQIQDALDKAQRCNPIVAMMTGSGSCIFAVQADKGKYRFIEDVFQHL.

Residue Lys15 is part of the active site. 97–107 (PMGSGLGGGSS) is an ATP binding site. The active site involves Asp137.

Belongs to the GHMP kinase family. IspE subfamily.

It carries out the reaction 4-CDP-2-C-methyl-D-erythritol + ATP = 4-CDP-2-C-methyl-D-erythritol 2-phosphate + ADP + H(+). Its pathway is isoprenoid biosynthesis; isopentenyl diphosphate biosynthesis via DXP pathway; isopentenyl diphosphate from 1-deoxy-D-xylulose 5-phosphate: step 3/6. In terms of biological role, catalyzes the phosphorylation of the position 2 hydroxy group of 4-diphosphocytidyl-2C-methyl-D-erythritol. This chain is 4-diphosphocytidyl-2-C-methyl-D-erythritol kinase, found in Pseudothermotoga lettingae (strain ATCC BAA-301 / DSM 14385 / NBRC 107922 / TMO) (Thermotoga lettingae).